A 352-amino-acid chain; its full sequence is Photosystem II D2 protein (352 aa).

N-acetylthreonine is present on T2. Position 2 is a phosphothreonine (T2). The chain crosses the membrane as a helical span at residues 40 to 60; that stretch reads TAYLALGGWLTGTTFVTSWYT. Residue H117 coordinates chlorophyll a. Residues 124–140 form a helical membrane-spanning segment; sequence GFMLRQFEIARSVKLRP. Positions 129 and 142 each coordinate pheophytin a. The chain crosses the membrane as a helical span at residues 152–165; sequence VFVSVFLIYPLGQS. Residue H197 participates in chlorophyll a binding. The helical transmembrane segment at 207-227 threads the bilayer; the sequence is AALLCAIHGATVENTLFEDGD. Positions 214 and 261 each coordinate a plastoquinone. H214 is a Fe cation binding site. H268 is a Fe cation binding site. A helical transmembrane segment spans residues 278 to 294; the sequence is GLWMSALGVVGLALNLR.

This sequence belongs to the reaction center PufL/M/PsbA/D family. As to quaternary structure, PSII is composed of 1 copy each of membrane proteins PsbA, PsbB, PsbC, PsbD, PsbE, PsbF, PsbH, PsbI, PsbJ, PsbK, PsbL, PsbM, PsbT, PsbX, PsbY, PsbZ, Psb30/Ycf12, at least 3 peripheral proteins of the oxygen-evolving complex and a large number of cofactors. It forms dimeric complexes. Requires The D1/D2 heterodimer binds P680, chlorophylls that are the primary electron donor of PSII, and subsequent electron acceptors. It shares a non-heme iron and each subunit binds pheophytin, quinone, additional chlorophylls, carotenoids and lipids. There is also a Cl(-1) ion associated with D1 and D2, which is required for oxygen evolution. The PSII complex binds additional chlorophylls, carotenoids and specific lipids. as cofactor.

It is found in the plastid. The protein resides in the chloroplast thylakoid membrane. The catalysed reaction is 2 a plastoquinone + 4 hnu + 2 H2O = 2 a plastoquinol + O2. Photosystem II (PSII) is a light-driven water:plastoquinone oxidoreductase that uses light energy to abstract electrons from H(2)O, generating O(2) and a proton gradient subsequently used for ATP formation. It consists of a core antenna complex that captures photons, and an electron transfer chain that converts photonic excitation into a charge separation. The D1/D2 (PsbA/PsbD) reaction center heterodimer binds P680, the primary electron donor of PSII as well as several subsequent electron acceptors. D2 is needed for assembly of a stable PSII complex. This is Photosystem II D2 protein from Pleurastrum terricola (Filamentous green alga).